The primary structure comprises 91 residues: DNA-directed RNA polymerase subunit omega (91 aa).

Belongs to the RNA polymerase subunit omega family. As to quaternary structure, the RNAP catalytic core consists of 2 alpha, 1 beta, 1 beta' and 1 omega subunit. When a sigma factor is associated with the core the holoenzyme is formed, which can initiate transcription.

It catalyses the reaction RNA(n) + a ribonucleoside 5'-triphosphate = RNA(n+1) + diphosphate. Functionally, promotes RNA polymerase assembly. Latches the N- and C-terminal regions of the beta' subunit thereby facilitating its interaction with the beta and alpha subunits. The sequence is that of DNA-directed RNA polymerase subunit omega from Pectobacterium atrosepticum (strain SCRI 1043 / ATCC BAA-672) (Erwinia carotovora subsp. atroseptica).